Consider the following 310-residue polypeptide: UDP-N-acetylenolpyruvoylglucosamine reductase (310 aa).

The region spanning 23 to 188 (KVGGNAEIFF…LKAVFKVNKG (166 aa)) is the FAD-binding PCMH-type domain. Arg-168 is an active-site residue. Ser-217 serves as the catalytic Proton donor. The active site involves Glu-287.

It belongs to the MurB family. The cofactor is FAD.

It is found in the cytoplasm. The enzyme catalyses UDP-N-acetyl-alpha-D-muramate + NADP(+) = UDP-N-acetyl-3-O-(1-carboxyvinyl)-alpha-D-glucosamine + NADPH + H(+). It functions in the pathway cell wall biogenesis; peptidoglycan biosynthesis. Its function is as follows. Cell wall formation. This chain is UDP-N-acetylenolpyruvoylglucosamine reductase, found in Rickettsia bellii (strain OSU 85-389).